Consider the following 241-residue polypeptide: Uridylate kinase (241 aa).

9-10 lines the ATP pocket; that stretch reads GS. A UMP-binding site is contributed by glycine 44. Residues glycine 45 and arginine 49 each coordinate ATP. UMP-binding positions include aspartate 66 and 114–120; that span reads VVAGQTT. Positions 140, 146, and 149 each coordinate ATP.

The protein belongs to the UMP kinase family. As to quaternary structure, homohexamer.

The protein localises to the cytoplasm. It carries out the reaction UMP + ATP = UDP + ADP. Its pathway is pyrimidine metabolism; CTP biosynthesis via de novo pathway; UDP from UMP (UMPK route): step 1/1. With respect to regulation, inhibited by UTP. In terms of biological role, catalyzes the reversible phosphorylation of UMP to UDP. This Halobacterium salinarum (strain ATCC 29341 / DSM 671 / R1) protein is Uridylate kinase.